The chain runs to 120 residues: NAD(P)H-quinone oxidoreductase subunit 3, chloroplastic (120 aa).

A run of 3 helical transmembrane segments spans residues 9 to 29 (IFWA…LISG), 64 to 84 (MFAL…PWAM), and 88 to 108 (VLGV…IIGS).

This sequence belongs to the complex I subunit 3 family. As to quaternary structure, NDH is composed of at least 16 different subunits, 5 of which are encoded in the nucleus.

The protein localises to the plastid. It localises to the chloroplast thylakoid membrane. The enzyme catalyses a plastoquinone + NADH + (n+1) H(+)(in) = a plastoquinol + NAD(+) + n H(+)(out). It carries out the reaction a plastoquinone + NADPH + (n+1) H(+)(in) = a plastoquinol + NADP(+) + n H(+)(out). Functionally, NDH shuttles electrons from NAD(P)H:plastoquinone, via FMN and iron-sulfur (Fe-S) centers, to quinones in the photosynthetic chain and possibly in a chloroplast respiratory chain. The immediate electron acceptor for the enzyme in this species is believed to be plastoquinone. Couples the redox reaction to proton translocation, and thus conserves the redox energy in a proton gradient. This is NAD(P)H-quinone oxidoreductase subunit 3, chloroplastic from Drimys granadensis.